Consider the following 445-residue polypeptide: Putative transcription factor bHLH056 (445 aa).

3 disordered regions span residues 36–70, 224–260, and 365–445; these read NQTHRQSYDPPPILRGSGSGRGEENAPLSQPPPHL, QIQPATESKLKAREETHGTEEARGSTSRKRSRTAEMH, and PFPN…QPTA. Over residues 231-246 the composition is skewed to basic and acidic residues; that stretch reads SKLKAREETHGTEEAR. The bHLH domain occupies 255–304; the sequence is RTAEMHNLAERRRREKINEKMKTLQQLIPRCNKSTKVSTLDDAIEYVKSL. Residues 418–433 show a composition bias toward low complexity; it reads QGQTTSQLSSGQASSS.

In terms of assembly, homodimer.

The protein resides in the nucleus. This is Putative transcription factor bHLH056 (BHLH56) from Arabidopsis thaliana (Mouse-ear cress).